The primary structure comprises 613 residues: Coiled-coil domain-containing protein 116 (613 aa).

Positions 41-68 (KPGRVPHPPSTCGSSALQGQRRNKRHPQ) are disordered. Residues 51–60 (TCGSSALQGQ) show a composition bias toward polar residues. Residues 79–104 (ESQVLDSLETVVEKATERMAAMKTEA) adopt a coiled-coil conformation. Disordered stretches follow at residues 329–395 (CRDG…AQVA), 509–541 (RQAS…QATE), and 565–613 (MSAC…EDGV). Serine 386 bears the Phosphoserine mark. The span at 512–539 (SRLSTSHCSTETPSVQQEPATHTAQDQA) shows a compositional bias: polar residues. Positions 577–589 (KSKDMDNEGRDKA) are enriched in basic and acidic residues. Residues 590-613 (EIEDEDEDEFKDEDQDEDKDEDGV) show a composition bias toward acidic residues.

The protein resides in the cytoplasm. Its subcellular location is the cytoskeleton. It is found in the microtubule organizing center. It localises to the centrosome. This Homo sapiens (Human) protein is Coiled-coil domain-containing protein 116 (CCDC116).